We begin with the raw amino-acid sequence, 361 residues long: Rho-GTPase-activating protein 5 (361 aa).

A Rho-GAP domain is found at 52-245 (IFLTRRDGEK…FLINHQGSFI (194 aa)). Over residues 306–323 (SSATYSNSPSSNFSNMKS) the composition is skewed to low complexity. Residues 306 to 345 (SSATYSNSPSSNFSNMKSSEVDPGSPPRIKSRSYSLSRSS) form a disordered region.

It is found in the membrane. In terms of biological role, GTPase-activating protein for Rho1. Has a role in the negative regulation of (1-3)beta-D-glucan synthase activity and cell integrity. This chain is Rho-GTPase-activating protein 5 (rga5), found in Schizosaccharomyces pombe (strain 972 / ATCC 24843) (Fission yeast).